The sequence spans 100 residues: Small ribosomal subunit protein uS14c (100 aa).

This sequence belongs to the universal ribosomal protein uS14 family. In terms of assembly, part of the 30S ribosomal subunit.

The protein resides in the plastid. It is found in the chloroplast. Its function is as follows. Binds 16S rRNA, required for the assembly of 30S particles. The sequence is that of Small ribosomal subunit protein uS14c from Pelargonium hortorum (Common geranium).